A 132-amino-acid chain; its full sequence is NADPH-dependent 7-cyano-7-deazaguanine reductase (132 aa).

Cys-43 acts as the Thioimide intermediate in catalysis. The Proton donor role is filled by Asp-50. Residues 65–67 (VEL) and 84–85 (HE) each bind substrate.

It belongs to the GTP cyclohydrolase I family. QueF type 1 subfamily.

It is found in the cytoplasm. The catalysed reaction is 7-aminomethyl-7-carbaguanine + 2 NADP(+) = 7-cyano-7-deazaguanine + 2 NADPH + 3 H(+). It participates in tRNA modification; tRNA-queuosine biosynthesis. Catalyzes the NADPH-dependent reduction of 7-cyano-7-deazaguanine (preQ0) to 7-aminomethyl-7-deazaguanine (preQ1). This is NADPH-dependent 7-cyano-7-deazaguanine reductase from Thermosynechococcus vestitus (strain NIES-2133 / IAM M-273 / BP-1).